Here is a 190-residue protein sequence, read N- to C-terminus: uncharacterized protein (190 aa).

4 helical membrane passes run leucine 15–isoleucine 35, phenylalanine 58–isoleucine 78, phenylalanine 94–phenylalanine 114, and phenylalanine 148–valine 168.

It localises to the membrane. This is an uncharacterized protein from Saccharomyces cerevisiae (strain ATCC 204508 / S288c) (Baker's yeast).